Consider the following 273-residue polypeptide: Proteasome subunit beta type-5-B (273 aa).

The propeptide at 1–57 (MKLDTSGLETTMPVIGFGSNSEMLDGFSSAPSFDLPRTTDFDGFQKKAVEMVKPAKG) is removed in mature form. Thr58 functions as the Nucleophile in the catalytic mechanism.

It belongs to the peptidase T1B family. In terms of assembly, component of the 20S core complex of the 26S proteasome. The 26S proteasome is composed of a core protease (CP), known as the 20S proteasome, capped at one or both ends by the 19S regulatory particle (RP/PA700). The 20S proteasome core is composed of 28 subunits that are arranged in four stacked rings, resulting in a barrel-shaped structure. The two end rings are each formed by seven alpha subunits, and the two central rings are each formed by seven beta subunits. The catalytic chamber with the active sites is on the inside of the barrel.

It is found in the cytoplasm. Its subcellular location is the nucleus. It carries out the reaction Cleavage of peptide bonds with very broad specificity.. The proteasome is a multicatalytic proteinase complex which is characterized by its ability to cleave peptides with Arg, Phe, Tyr, Leu, and Glu adjacent to the leaving group at neutral or slightly basic pH. The proteasome has an ATP-dependent proteolytic activity. This is Proteasome subunit beta type-5-B (PBE2) from Arabidopsis thaliana (Mouse-ear cress).